Here is a 258-residue protein sequence, read N- to C-terminus: Type III pantothenate kinase (258 aa).

Residue 6–13 participates in ATP binding; the sequence is DVGNTNIV. Substrate-binding positions include tyrosine 100 and 107–110; that span reads GADR. Aspartate 109 acts as the Proton acceptor in catalysis. Aspartate 129 contributes to the K(+) binding site. An ATP-binding site is contributed by threonine 132. Residue threonine 184 participates in substrate binding.

This sequence belongs to the type III pantothenate kinase family. In terms of assembly, homodimer. NH4(+) serves as cofactor. K(+) is required as a cofactor.

It localises to the cytoplasm. It carries out the reaction (R)-pantothenate + ATP = (R)-4'-phosphopantothenate + ADP + H(+). It participates in cofactor biosynthesis; coenzyme A biosynthesis; CoA from (R)-pantothenate: step 1/5. Catalyzes the phosphorylation of pantothenate (Pan), the first step in CoA biosynthesis. This is Type III pantothenate kinase from Clostridium botulinum (strain Kyoto / Type A2).